The chain runs to 571 residues: Pectinesterase/pectinesterase inhibitor (571 aa).

Residues 27-178 form a pectinesterase inhibitor region; sequence NSHQKAVESL…KILSSNAIDI (152 aa). The interval 233–254 is disordered; sequence AQAGRPGAPADEGIGEGGGGGG. The pectinesterase stretch occupies residues 259-558; sequence THVVAKDGSG…TVANWLTPAN (300 aa). Residues T336 and Q366 each contribute to the substrate site. Catalysis depends on D389, which acts as the Proton donor; for pectinesterase activity. Residue D410 is the Nucleophile; for pectinesterase activity of the active site. Substrate-binding residues include R479 and W481.

It in the N-terminal section; belongs to the PMEI family. This sequence in the C-terminal section; belongs to the pectinesterase family.

It is found in the secreted. The protein localises to the cell wall. The enzyme catalyses [(1-&gt;4)-alpha-D-galacturonosyl methyl ester](n) + n H2O = [(1-&gt;4)-alpha-D-galacturonosyl](n) + n methanol + n H(+). It participates in glycan metabolism; pectin degradation; 2-dehydro-3-deoxy-D-gluconate from pectin: step 1/5. Its function is as follows. Acts in the modification of cell walls via demethylesterification of cell wall pectin. The protein is Pectinesterase/pectinesterase inhibitor of Brassica campestris (Field mustard).